A 522-amino-acid chain; its full sequence is Peptide chain release factor 3 (522 aa).

The 268-residue stretch at 10-277 (ASRKTFAIIS…TFVDFAPSPS (268 aa)) folds into the tr-type G domain. Residues 19-26 (SHPDAGKT), 87-91 (DTPGH), and 141-144 (NKMD) each bind GTP.

This sequence belongs to the TRAFAC class translation factor GTPase superfamily. Classic translation factor GTPase family. PrfC subfamily.

Its subcellular location is the cytoplasm. Its function is as follows. Increases the formation of ribosomal termination complexes and stimulates activities of RF-1 and RF-2. It binds guanine nucleotides and has strong preference for UGA stop codons. It may interact directly with the ribosome. The stimulation of RF-1 and RF-2 is significantly reduced by GTP and GDP, but not by GMP. This chain is Peptide chain release factor 3, found in Listeria innocua serovar 6a (strain ATCC BAA-680 / CLIP 11262).